A 652-amino-acid polypeptide reads, in one-letter code: Probable L-type lectin-domain containing receptor kinase S.5 (652 aa).

The N-terminal stretch at 1–20 is a signal peptide; the sequence is MRFSLAWKLLFLILTCKIET. Residues 21–266 are Extracellular-facing; the sequence is QVKCLKFDFP…EGLKIDGDGN (246 aa). Residues 24–257 form a legume-lectin like region; sequence CLKFDFPGFN…LNCVRSWSFE (234 aa). N-linked (GlcNAc...) asparagine glycosylation is found at Asn33, Asn91, Asn97, Asn100, Asn122, Asn139, Asn201, and Asn244. A helical transmembrane segment spans residues 267–287; the sequence is MLWLWITIPIVFIVGIGAFLG. Topologically, residues 288–652 are cytoplasmic; that stretch reads ALYLRSRSKA…INSLTELTGR (365 aa). One can recognise a Protein kinase domain in the interval 330 to 622; that stretch reads FGAENKLGQG…PDVPTERPAF (293 aa). ATP-binding positions include 336-344 and Lys357; that span reads LGQGGFGMV. Asp455 functions as the Proton acceptor in the catalytic mechanism.

In the C-terminal section; belongs to the protein kinase superfamily. Ser/Thr protein kinase family. It in the N-terminal section; belongs to the leguminous lectin family.

It localises to the cell membrane. The enzyme catalyses L-seryl-[protein] + ATP = O-phospho-L-seryl-[protein] + ADP + H(+). It catalyses the reaction L-threonyl-[protein] + ATP = O-phospho-L-threonyl-[protein] + ADP + H(+). This Arabidopsis thaliana (Mouse-ear cress) protein is Probable L-type lectin-domain containing receptor kinase S.5 (LECRKS5).